A 570-amino-acid polypeptide reads, in one-letter code: MRVVTKLLYLVVLAICGLGIHGALTHTRVTPPVYPSVSFNLTGADTYGPFLRALQEKVILGNHTAFDLPVLNPESQVSDSNRFVLVPLTNPSGDTVTLAIDVVNLYVVAFSSNGRSYFFSGSTAVQRDNLFVDTTQEELNFTGNYISLERQVGFGRVYIPLGPKSLAQAISSLRTYTLSAGDTKPLARGLLVVIQMVSEAARFRYIELRIRTSITDASEFTPDLLMLSMENNWSSMSSEIQQAQPGGIFPGVVQLRDERNNPIEVTNFRRLFELTYIAVLLYGCAPVTSNSYTNNAIDAQIIKMPVFRGGGYEKVCSVVEVTRRISGWDGLCVDVRDGHYIDGNTVQLGPCGNECNQLWTFRTDGTIRWLGKCLTTSSSVMIYDCNTVPPEATKWVVSTDGTITNPRSGLVLTAPQAAEGTALSLENNIHAARQGWTVGDVEPLVTFIVGYKQMCLTENGENNFVWLEDCVLNRVEQEWALYGDGTIRVNSNRSLCVTSEDHEPSDLIVILKCEGSGNQRWVFNTNGTISNPNAKLVMDVAQSNVSLRKIILYPPTGNPNQQWITTTQPA.

The first 28 residues, Met-1–Arg-28, serve as a signal peptide directing secretion. Residues Asn-40, Asn-62, and Asn-140 are each glycosylated (N-linked (GlcNAc...) asparagine). Glu-199 is an active-site residue. Asn-232 carries an N-linked (GlcNAc...) asparagine glycan. 3 disulfides stabilise this stretch: Cys-284-Cys-316, Cys-332-Cys-351, and Cys-373-Cys-385. Ricin B-type lectin domains follow at residues Val-319–Gly-439 and Val-441–Thr-566. A 1-alpha repeat occupies Asp-329 to Trp-369. The stretch at Leu-370–Asn-405 is one 1-beta repeat. A 1-gamma repeat occupies Ser-408–Asp-440. A 2-alpha repeat occupies Lys-452–Val-489. Cys-455 and Cys-470 form a disulfide bridge. The N-linked (GlcNAc...) asparagine glycan is linked to Asn-492. The stretch at Arg-493 to Asn-531 is one 2-beta repeat. A disulfide bond links Cys-496 and Cys-513. Residues Asn-526 and Asn-544 are each glycosylated (N-linked (GlcNAc...) asparagine). A 2-gamma repeat occupies Ala-534–Thr-567.

This sequence belongs to the ribosome-inactivating protein family. Type 2 RIP subfamily. In terms of assembly, tetramer of four pairs of disulfide bound A-B chains. In terms of processing, the precursor is processed in two chains, A and B, that are linked by a disulfide bond. A small truncated form corresponding roughly to the second ricin B-type lectin domain of the B chain, TrSNAIf, can also be produced. N-glycosylated. As to expression, expressed in fruits.

It carries out the reaction Endohydrolysis of the N-glycosidic bond at one specific adenosine on the 28S rRNA.. Its function is as follows. Neu5Ac(alpha2-6)Gal/GalNAc specific agglutinin. Behaves as a type-2 ribosome-inactivating protein. Strongly inhibits mammalian but not plant ribosomes. The A chain is responsible for inhibiting protein synthesis through the catalytic inactivation of 60S ribosomal subunits by removing adenine from position 4,324 of 28S rRNA. The B chain binds to cell receptors and probably facilitates the entry into the cell of the A chain; B chains are also responsible for cell agglutination (lectin activity). Involved in plant defense against insects. Functionally, binds Neu5Ac(alpha2-6)Gal/GalNAc but has no clear agglutination activity. The chain is Ribosome-inactivating protein SNAIf from Sambucus nigra (European elder).